Here is a 720-residue protein sequence, read N- to C-terminus: Fatty acid CoA ligase Acsl3 (720 aa).

A helical; Signal-anchor for type III membrane protein transmembrane segment spans residues 21-41 (ILLYFIHFIISLYTILTYIPF). The Cytoplasmic portion of the chain corresponds to 42-720 (YFLCESKQEK…ADIERMYGRK (679 aa)). Position 683 is a phosphoserine (Ser683).

Belongs to the ATP-dependent AMP-binding enzyme family. Requires Mg(2+) as cofactor. As to expression, predominantly expressed in the brain, and to a much lesser extent, in lung, adrenal gland, kidney, small intestine, and adipose tissue but not detected in heart or liver.

Its subcellular location is the mitochondrion outer membrane. The protein localises to the peroxisome membrane. It localises to the microsome membrane. It is found in the endoplasmic reticulum membrane. It carries out the reaction a long-chain fatty acid + ATP + CoA = a long-chain fatty acyl-CoA + AMP + diphosphate. The enzyme catalyses (5Z,8Z,11Z,14Z)-eicosatetraenoate + ATP + CoA = (5Z,8Z,11Z,14Z)-eicosatetraenoyl-CoA + AMP + diphosphate. It catalyses the reaction a medium-chain fatty acid + ATP + CoA = a medium-chain fatty acyl-CoA + AMP + diphosphate. The catalysed reaction is 15-hydroxy-(5Z,8Z,11Z,13E)-eicosatetraenoate + ATP + CoA = 15-hydroxy-(5Z,8Z,11Z,13E)-eicosatetraenoyl-CoA + AMP + diphosphate. It carries out the reaction 12-hydroxy-(5Z,8Z,10E,14Z)-eicosatetraenoate + ATP + CoA = 12-hydroxy-(5Z,8Z,10E,14Z)-eicosatetraenoyl-CoA + AMP + diphosphate. The enzyme catalyses 5-hydroxy-(6E,8Z,11Z,14Z)-eicosatetraenoate + ATP + CoA = 5-hydroxy-(6E,8Z,11Z,14Z)-eicosatetraenoyl-CoA + AMP + diphosphate. It catalyses the reaction 14,15-epoxy-(5Z,8Z,11Z)-eicosatrienoate + ATP + CoA = 14,15-epoxy-(5Z,8Z,11Z)-eicosatrienoyl-CoA + AMP + diphosphate. The catalysed reaction is 11,12-epoxy-(5Z,8Z,14Z)-eicosatrienoate + ATP + CoA = 11,12-epoxy-(5Z,8Z,14Z)-eicosatrienoyl-CoA + AMP + diphosphate. It carries out the reaction (E)-hexadec-2-enoate + ATP + CoA = (2E)-hexadecenoyl-CoA + AMP + diphosphate. The enzyme catalyses hexadecanoate + ATP + CoA = hexadecanoyl-CoA + AMP + diphosphate. It catalyses the reaction tetradecanoate + ATP + CoA = tetradecanoyl-CoA + AMP + diphosphate. The catalysed reaction is dodecanoate + ATP + CoA = dodecanoyl-CoA + AMP + diphosphate. It carries out the reaction octadecanoate + ATP + CoA = octadecanoyl-CoA + AMP + diphosphate. The enzyme catalyses eicosanoate + ATP + CoA = eicosanoyl-CoA + AMP + diphosphate. It catalyses the reaction (9Z)-octadecenoate + ATP + CoA = (9Z)-octadecenoyl-CoA + AMP + diphosphate. The catalysed reaction is (9Z)-hexadecenoate + ATP + CoA = (9Z)-hexadecenoyl-CoA + AMP + diphosphate. It carries out the reaction (9Z,12Z)-octadecadienoate + ATP + CoA = (9Z,12Z)-octadecadienoyl-CoA + AMP + diphosphate. The enzyme catalyses (9Z,12Z,15Z)-octadecatrienoate + ATP + CoA = (9Z,12Z,15Z)-octadecatrienoyl-CoA + AMP + diphosphate. It catalyses the reaction (4Z,7Z,10Z,13Z,16Z,19Z)-docosahexaenoate + ATP + CoA = (4Z,7Z,10Z,13Z,16Z,19Z)-docosahexaenoyl-CoA + AMP + diphosphate. The catalysed reaction is (5Z,8Z,11Z,14Z,17Z)-eicosapentaenoate + ATP + CoA = (5Z,8Z,11Z,14Z,17Z)-eicosapentaenoyl-CoA + AMP + diphosphate. It carries out the reaction a fatty acid + ATP + CoA = a fatty acyl-CoA + AMP + diphosphate. Functionally, catalyzes the conversion of long-chain fatty acids to their active form acyl-CoA for both synthesis of cellular lipids, and degradation via beta-oxidation. ACSL3 is required for the incorporation of fatty acids into phosphatidylcholine, the major phospholipid located on the surface of VLDL (very low density lipoproteins). Has mainly an anabolic role in energy metabolism. Mediates hepatic lipogenesis. Preferentially uses myristate, laurate, arachidonate and eicosapentaenoate as substrates. Both isoforms exhibit the same level of activity. The chain is Fatty acid CoA ligase Acsl3 from Rattus norvegicus (Rat).